We begin with the raw amino-acid sequence, 411 residues long: MELISKALEAVRRYPLCDSCLGRLFALMGYGIENRERGQAIKTILHMAAVSDYRKGKDVTADLIALAKCHLPTRRFLAGVGIRVDEERCYICGDLMEGVEKYAEMAVEQLRGLDFVSFAVGSTLPEELLEKEAEVVKSLLVTTGESVKHEVNRRIGKELLRRLSDKRVDKLRPNVVVNVDLVSGQVKVVRNPILIGGRYLKLGRKIAQAKRFGNVRTTLLEKLAYLRDTFGGEDHVIHVSGREDSDARMLGSGRPLVVEVKQPLRYTAQVAPFRDKDVIFLPVGFTDRNEVRRLKEKAKTDIKLYRVLVLSESPLKQDDLSKLSALSGATVTQYTPRRIKRLHPRKKRVRMVYDVAWRLVSPHVFELYIRCQGGLYVKEFVHGDGGRTAPNVAELLNTRLEVLELDVLYIE.

Residues 65-192 (ALAKCHLPTR…SGQVKVVRNP (128 aa)) enclose the THUMP domain. D244 (nucleophile) is an active-site residue. Substrate is bound by residues Y305 and Y376.

This sequence belongs to the pseudouridine synthase Pus10 family.

It carries out the reaction uridine(54) in tRNA = pseudouridine(54) in tRNA. It catalyses the reaction uridine(55) in tRNA = pseudouridine(55) in tRNA. Responsible for synthesis of pseudouridine from uracil-54 and uracil-55 in the psi GC loop of transfer RNAs. The chain is tRNA pseudouridine synthase Pus10 from Pyrobaculum arsenaticum (strain DSM 13514 / JCM 11321 / PZ6).